We begin with the raw amino-acid sequence, 172 residues long: C-phycocyanin subunit beta (172 aa).

Asn72 carries the N4-methylasparagine modification. 2 residues coordinate (2R,3E)-phycocyanobilin: Cys82 and Cys153.

The protein belongs to the phycobiliprotein family. Heterodimer of an alpha and a beta subunit, which further assembles into trimers and the trimers into hexamers. In terms of processing, contains two covalently linked bilin chromophores. The chromophore on position 82 is added by the phycocyanobilin lyase CpcUS, while the chromophore on position 153 is added by the phycocyanobilin lyase CpcT.

Its subcellular location is the cellular thylakoid membrane. Functionally, light-harvesting photosynthetic bile pigment-protein from the phycobiliprotein complex (phycobilisome, PBS). Phycocyanin is the major phycobiliprotein in the PBS rod. In Picosynechococcus sp. (strain ATCC 27264 / PCC 7002 / PR-6) (Agmenellum quadruplicatum), this protein is C-phycocyanin subunit beta (cpcB).